The following is a 329-amino-acid chain: tRNA pseudouridine synthase B (329 aa).

Residue Asp42 is the Nucleophile of the active site.

It belongs to the pseudouridine synthase TruB family. Type 1 subfamily.

It carries out the reaction uridine(55) in tRNA = pseudouridine(55) in tRNA. Its function is as follows. Responsible for synthesis of pseudouridine from uracil-55 in the psi GC loop of transfer RNAs. This is tRNA pseudouridine synthase B from Lactococcus lactis subsp. lactis (strain IL1403) (Streptococcus lactis).